The following is a 293-amino-acid chain: NAD kinase (293 aa).

The Proton acceptor role is filled by Asp73. Residues 73 to 74, His78, 147 to 148, Arg158, Arg175, Asp177, 188 to 193, and Gln248 contribute to the NAD(+) site; these read DG, ND, and TAYALS.

It belongs to the NAD kinase family. It depends on a divalent metal cation as a cofactor.

It is found in the cytoplasm. It carries out the reaction NAD(+) + ATP = ADP + NADP(+) + H(+). Functionally, involved in the regulation of the intracellular balance of NAD and NADP, and is a key enzyme in the biosynthesis of NADP. Catalyzes specifically the phosphorylation on 2'-hydroxyl of the adenosine moiety of NAD to yield NADP. This Nitrosococcus oceani (strain ATCC 19707 / BCRC 17464 / JCM 30415 / NCIMB 11848 / C-107) protein is NAD kinase.